The following is a 471-amino-acid chain: 3-isopropylmalate dehydratase large subunit (471 aa).

The [4Fe-4S] cluster site is built by Cys347, Cys407, and Cys410.

It belongs to the aconitase/IPM isomerase family. LeuC type 1 subfamily. In terms of assembly, heterodimer of LeuC and LeuD. [4Fe-4S] cluster serves as cofactor.

It catalyses the reaction (2R,3S)-3-isopropylmalate = (2S)-2-isopropylmalate. It participates in amino-acid biosynthesis; L-leucine biosynthesis; L-leucine from 3-methyl-2-oxobutanoate: step 2/4. Functionally, catalyzes the isomerization between 2-isopropylmalate and 3-isopropylmalate, via the formation of 2-isopropylmaleate. This is 3-isopropylmalate dehydratase large subunit from Geobacillus kaustophilus (strain HTA426).